Here is a 413-residue protein sequence, read N- to C-terminus: Probable N-acetyltransferase HLS1-like (413 aa).

The N-acetyltransferase domain occupies 5–187; the sequence is VEVREYDPSK…VNPVYAHRVN (183 aa).

This sequence belongs to the acetyltransferase family.

This Arabidopsis thaliana (Mouse-ear cress) protein is Probable N-acetyltransferase HLS1-like.